Here is a 186-residue protein sequence, read N- to C-terminus: Ribosome-recycling factor (186 aa).

2 stretches are compositionally biased toward basic and acidic residues: residues R134 to E169 and A176 to D186. The segment at R134–D186 is disordered.

Belongs to the RRF family.

The protein resides in the cytoplasm. Functionally, responsible for the release of ribosomes from messenger RNA at the termination of protein biosynthesis. May increase the efficiency of translation by recycling ribosomes from one round of translation to another. The polypeptide is Ribosome-recycling factor (Rhodopirellula baltica (strain DSM 10527 / NCIMB 13988 / SH1)).